We begin with the raw amino-acid sequence, 1072 residues long: Integrator complex subunit 3 homolog (1072 aa).

2 disordered regions span residues 920–943 and 1002–1072; these read YPSSSPNKRKRPPKGISVSTSTPS and DTTV…NDSD. Residues S1042, S1043, S1047, and S1048 each carry the phosphoserine modification.

Belongs to the Integrator subunit 3 family. In terms of assembly, belongs to the multiprotein complex Integrator, at least composed of IntS1, IntS2, IntS3, IntS4, omd/IntS5, IntS6, defl/IntS7, IntS8, IntS9, IntS10, IntS11, IntS12, asun/IntS13, IntS14 and IntS15. The core complex associates with protein phosphatase 2A subunits mts/PP2A and Pp2A-29B, to form the Integrator-PP2A (INTAC) complex.

It localises to the nucleus. The protein resides in the cytoplasm. Component of the integrator complex, a multiprotein complex that terminates RNA polymerase II (Pol II) transcription in the promoter-proximal region of genes. The integrator complex provides a quality checkpoint during transcription elongation by driving premature transcription termination of transcripts that are unfavorably configured for transcriptional elongation: the complex terminates transcription by (1) catalyzing dephosphorylation of the C-terminal domain (CTD) of Pol II subunit Polr2A/Rbp1 and Spt5, and (2) degrading the exiting nascent RNA transcript via endonuclease activity. The integrator complex is also involved in the 3'-end processing of the U7 snRNA, and also the spliceosomal snRNAs U1, U2, U4 and U5. In Drosophila yakuba (Fruit fly), this protein is Integrator complex subunit 3 homolog (IntS3).